A 275-amino-acid chain; its full sequence is Notch homolog 2 N-terminal-like protein B (275 aa).

An N-terminal signal peptide occupies residues 1-25 (MPALRPALLWALLALWLCCATPAHA). EGF-like domains follow at residues 26-63 (LQCR…EYCQ), 64-102 (HRDP…EDCQ), 105-143 (TSHP…KECQ), and 144-180 (WTDA…QKCE). Disulfide bonds link Cys28–Cys41, Cys35–Cys51, Cys53–Cys62, Cys68–Cys79, Cys73–Cys90, Cys92–Cys101, Cys109–Cys121, Cys115–Cys131, Cys133–Cys142, Cys148–Cys159, Cys153–Cys168, Cys170–Cys179, Cys186–Cys198, Cys192–Cys207, Cys209–Cys218, Cys225–Cys236, and Cys230–Cys246. Residue Asn46 is glycosylated (N-linked (GlcNAc...) asparagine). The N-linked (GlcNAc...) asparagine glycan is linked to Asn155. Residues 182–219 (DVNECDIPGHCQHGGICLNLPGSYQCQCLQGFTGQYCD) enclose the EGF-like 5; calcium-binding domain. An EGF-like 6 domain is found at 221-258 (LYVPCAPSPCVNGGTCRQTGDFTFECNCLPETVRRGTE).

The protein belongs to the NOTCH family. In terms of assembly, interacts with NOTCH2. Interacts with DLL1; the interaction is direct. Expressed in radial glia neural stem cells during cortical development.

The protein localises to the secreted. In terms of biological role, human-specific protein that promotes neural progenitor proliferation and evolutionary expansion of the brain neocortex by regulating the Notch signaling pathway. Able to promote neural progenitor self-renewal, possibly by down-regulating neuronal differentiation genes, thereby delaying the differentiation of neuronal progenitors and leading to an overall final increase in neuronal production. Acts by enhancing the Notch signaling pathway via two different mechanisms that probably work in parallel to reach the same effect. Enhances Notch signaling pathway in a non-cell-autonomous manner via direct interaction with NOTCH2. Also promotes Notch signaling pathway in a cell-autonomous manner through inhibition of cis DLL1-NOTCH2 interactions, which promotes neuronal differentiation. In Homo sapiens (Human), this protein is Notch homolog 2 N-terminal-like protein B.